A 248-amino-acid polypeptide reads, in one-letter code: PF03932 family protein CutC (248 aa).

It belongs to the CutC family. In terms of assembly, homodimer.

Its subcellular location is the cytoplasm. The protein is PF03932 family protein CutC of Escherichia coli O7:K1 (strain IAI39 / ExPEC).